The sequence spans 607 residues: DNA mismatch repair protein MutL (607 aa).

Residues 374–411 are disordered; sequence RTEAGNEHVPSANRIQPPDPSIDMPDEPVPEQTDEPVA. The segment covering 397–407 has biased composition (acidic residues); it reads MPDEPVPEQTD.

Belongs to the DNA mismatch repair MutL/HexB family.

Functionally, this protein is involved in the repair of mismatches in DNA. It is required for dam-dependent methyl-directed DNA mismatch repair. May act as a 'molecular matchmaker', a protein that promotes the formation of a stable complex between two or more DNA-binding proteins in an ATP-dependent manner without itself being part of a final effector complex. This chain is DNA mismatch repair protein MutL, found in Exiguobacterium sibiricum (strain DSM 17290 / CCUG 55495 / CIP 109462 / JCM 13490 / 255-15).